The sequence spans 219 residues: Abasic site processing protein YobE (219 aa).

Cys-2 acts as the Nucleophile in catalysis. Cys-2 is subject to Thiazolidine linkage to a ring-opened DNA abasic site. Residue Glu-106 is part of the active site.

It belongs to the SOS response-associated peptidase family.

Its activity is regulated as follows. Formation and reversal of DNA-protein cross-link depends on DNA context. Catalyzes formation of the thiazolidine linkage in presence of abasic sites in single-stranded DNA. Mediates the reversal of the thiazolidine cross-link in presence of double stranded DNA. Functionally, sensor of abasic sites in single-stranded DNA (ssDNA) required to preserve genome integrity by promoting error-free repair of abasic sites. Recognizes and binds abasic sites in ssDNA at replication forks and chemically modifies the lesion by forming a covalent cross-link with DNA: forms a stable thiazolidine linkage between a ring-opened abasic site and the alpha-amino and sulfhydryl substituents of its N-terminal catalytic cysteine residue. The DNA-protein cross-link is then reversed: able to catalyze the reversal of the thiazolidine cross-link and cycle between a cross-link and a non-cross-linked state depending on DNA context: mediates self-reversal of the thiazolidine cross-link in double stranded DNA. May act as a protease: mediates autocatalytic processing of its N-terminal methionine in order to expose the catalytic cysteine. The chain is Abasic site processing protein YobE (yobE) from Bacillus subtilis (strain 168).